The chain runs to 321 residues: Aldose reductase C (321 aa).

22-31 contributes to the NADP(+) binding site; sequence GNQIPSIGLG. Tyr-62 acts as the Proton donor in catalysis. His-124 is a binding site for substrate. An NADP(+)-binding site is contributed by 227–281; it reads SPLGQGKCDFFSNKILKSIAGKYKKSVANVIFKWLNQRGIAAIPKSGNHSRIIEN.

It belongs to the aldo/keto reductase family.

The catalysed reaction is an alditol + NAD(+) = an aldose + NADH + H(+). It carries out the reaction an alditol + NADP(+) = an aldose + NADPH + H(+). Functionally, catalyzes the NADPH-dependent reduction of a wide variety of carbonyl-containing compounds to their corresponding alcohols with a broad range of catalytic efficiencies. The chain is Aldose reductase C (alrC) from Dictyostelium discoideum (Social amoeba).